Here is a 346-residue protein sequence, read N- to C-terminus: Leucine zipper protein 2 (346 aa).

A signal peptide spans 1–17 (MKFIGAVYLLFLLPALS). Asn-19 and Asn-131 each carry an N-linked (GlcNAc...) asparagine glycan. A coiled-coil region spans residues 41-209 (RHLSKTSKEL…QLKALKDTVH (169 aa)). Residues 162–190 (LRYGKKDLIFKGQQLMDLENKLKVAKDEL) form a leucine-zipper region. Residues Asn-241 and Asn-296 are each glycosylated (N-linked (GlcNAc...) asparagine). The tract at residues 271 to 346 (SAVMRRESTG…LKKTQSDKHN (76 aa)) is disordered. Residues 293–324 (CSHNQTESSSVMKKTFGHSQSKTPEQNGQGQA) show a composition bias toward polar residues. Residues 326–346 (TAEESVKTDGELKKTQSDKHN) are compositionally biased toward basic and acidic residues.

The protein localises to the secreted. This Danio rerio (Zebrafish) protein is Leucine zipper protein 2 (luzp2).